Here is a 265-residue protein sequence, read N- to C-terminus: Hydroxyethylthiazole kinase (265 aa).

Methionine 50 contributes to the substrate binding site. ATP contacts are provided by arginine 125 and threonine 171. Glycine 198 provides a ligand contact to substrate.

Belongs to the Thz kinase family. Mg(2+) is required as a cofactor.

The enzyme catalyses 5-(2-hydroxyethyl)-4-methylthiazole + ATP = 4-methyl-5-(2-phosphooxyethyl)-thiazole + ADP + H(+). Its pathway is cofactor biosynthesis; thiamine diphosphate biosynthesis; 4-methyl-5-(2-phosphoethyl)-thiazole from 5-(2-hydroxyethyl)-4-methylthiazole: step 1/1. Catalyzes the phosphorylation of the hydroxyl group of 4-methyl-5-beta-hydroxyethylthiazole (THZ). In Salmonella paratyphi C (strain RKS4594), this protein is Hydroxyethylthiazole kinase.